The primary structure comprises 233 residues: Probable endonuclease lcl3 (233 aa).

The helical transmembrane segment at 10–29 (ISLRNLSYIILTISTGIVIH) threads the bilayer. The region spanning 57-218 (NSLYGYVTSV…RKRKLGMHSL (162 aa)) is the TNase-like domain. R106 is a catalytic residue. D111 contacts Ca(2+). Catalysis depends on residues E114 and R154.

It belongs to the LCL3 family.

It localises to the mitochondrion. It is found in the membrane. The sequence is that of Probable endonuclease lcl3 (lcl3) from Schizosaccharomyces japonicus (strain yFS275 / FY16936) (Fission yeast).